Here is a 1696-residue protein sequence, read N- to C-terminus: PH domain leucine-rich repeat protein phosphatase 1 (1696 aa).

Met1 carries the post-translational modification N-acetylmethionine. Disordered regions lie at residues 1 to 97 and 222 to 398; these read MEPA…GGGA and LGHG…VVGE. Residues 79-92 show a composition bias toward low complexity; sequence VPQPAAGGAAPVTA. Residues 313 to 325 show a composition bias toward polar residues; that stretch reads DTESFSLSPSAES. Ser378 carries the phosphoserine modification. A PH domain is found at 499–599; sequence RIQLSGMYNV…WLRQVSKVAS (101 aa). LRR repeat units follow at residues 601–622, 624–645, 655–676, 678–699, 701–722, 724–746, 836–857, 858–879, 881–902, 904–925, 926–947, 950–971, 976–996, 1000–1021, 1024–1045, 1047–1068, 1069–1090, and 1092–1113; these read RISSVDLSCCSLEHLPANLFYS, DLTHLNLKQNFLRQNPSLPAAR, KLKSLNLSNNHLGAFPSAVCSI, TLAELNVSCNALQEVPAAVGAM, NLQTFLLDGNFLQSLPAELENM, QLSYLGLSFNEFTDIPEVLEKLT, FLKALYASSNELVQLDVYPVPN, YLSYMDVSRNCLESVPEWVCES, KLEVLDIGHNQICELPARLFCN, SLRKLLAGHNRLARLPERLERT, SVEVLDVQHNQIIELPPNLLMK, SLRFLNASANKLETLPPATLSE, ILQELYLTNNSLTDKCVPLLT, RLKILHMAYNRLQSFPASKMAK, ELEEIDISGNKLKAIPTTIMNC, RMHTVIAHSNCIEVFPEVMQLP, EVKCVDLSCNELSEITLPENLP, and KLQELDLTGNPRLALDHKSLEL. Residues 1138-1385 enclose the PPM-type phosphatase domain; the sequence is SHGYTEASGV…DSISAVVVQL (248 aa). The Mn(2+) site is built by Asp1173, Gly1174, Lys1337, and Asp1376. Disordered regions lie at residues 1422 to 1473 and 1610 to 1696; these read RPSD…SPAY and KPGG…DTPL. Composition is skewed to low complexity over residues 1431–1452, 1647–1660, and 1670–1680; these read SSSSGMASEISSELSTSEMSSE, QQQQQQQQQQQQQQ, and QAQAQAQAQAQ. Residues 1694 to 1696 carry the PDZ-binding motif; sequence TPL.

In terms of assembly, interacts with the nucleotide free form of K-Ras (KRAS) via its LRR repeats. Interacts with AKT2, AKT3 and PRKCB isoform beta-II. Interacts with WDR48 and USP12. Mn(2+) serves as cofactor. As to expression, mainly present in brain (at protein level). Isoform 2 is more abundant in adult brain neurons than isoform 1 in. Isoforms 1 and 2 are expressed in the retina but not found in rod outer segments.

Its subcellular location is the cytoplasm. It is found in the membrane. It localises to the cell membrane. The protein localises to the nucleus. The protein resides in the nucleoplasm. Its subcellular location is the nucleus membrane. The catalysed reaction is O-phospho-L-seryl-[protein] + H2O = L-seryl-[protein] + phosphate. It catalyses the reaction O-phospho-L-threonyl-[protein] + H2O = L-threonyl-[protein] + phosphate. With respect to regulation, insensitive to okadaic acid. Deubiquitination by WDR48-USP12 complex positively regulates PHLPP1 stability. Functionally, protein phosphatase involved in regulation of Akt and PKC signaling. Mediates dephosphorylation in the C-terminal domain hydrophobic motif of members of the AGC Ser/Thr protein kinase family; specifically acts on 'Ser-473' of AKT2 and AKT3, 'Ser-660' of PRKCB and 'Ser-657' of PRKCA. Isoform 2 seems to have a major role in regulating Akt signaling in hippocampal neurons while isoform 1 may promote Akt and PKC activation and inhibit ERK signaling. Akt regulates the balance between cell survival and apoptosis through a cascade that primarily alters the function of transcription factors that regulate pro- and antiapoptotic genes. Dephosphorylation of 'Ser-473' of Akt triggers apoptosis and suppression of tumor growth. Dephosphorylation of PRKCA and PRKCB leads to their destabilization and degradation. Dephosphorylates STK4 on 'Thr-387' leading to STK4 activation and apoptosis. Dephosphorylates RPS6KB1 and is involved in regulation of cap-dependent translation. Inhibits cancer cell proliferation and may act as a tumor suppressor. Dephosphorylates RAF1 inhibiting its kinase activity. May act as a negative regulator of K-Ras signaling in membrane rafts. Involved in the hippocampus-dependent long-term memory formation. Involved in circadian control by regulating the consolidation of circadian periodicity after resetting. Involved in development and function of regulatory T-cells. This Rattus norvegicus (Rat) protein is PH domain leucine-rich repeat protein phosphatase 1 (Phlpp1).